Reading from the N-terminus, the 157-residue chain is Protein-export protein SecB (157 aa).

This sequence belongs to the SecB family. As to quaternary structure, homotetramer, a dimer of dimers. One homotetramer interacts with 1 SecA dimer.

It localises to the cytoplasm. One of the proteins required for the normal export of preproteins out of the cell cytoplasm. It is a molecular chaperone that binds to a subset of precursor proteins, maintaining them in a translocation-competent state. It also specifically binds to its receptor SecA. The chain is Protein-export protein SecB from Shewanella oneidensis (strain ATCC 700550 / JCM 31522 / CIP 106686 / LMG 19005 / NCIMB 14063 / MR-1).